Reading from the N-terminus, the 615-residue chain is 1-deoxy-D-xylulose-5-phosphate synthase (615 aa).

Residues H76 and 117–119 each bind thiamine diphosphate; that span reads GHS. D148 is a Mg(2+) binding site. Residues 149-150, N177, Y284, and E365 contribute to the thiamine diphosphate site; that span reads GA. N177 is a binding site for Mg(2+).

It belongs to the transketolase family. DXPS subfamily. In terms of assembly, homodimer. The cofactor is Mg(2+). Requires thiamine diphosphate as cofactor.

It carries out the reaction D-glyceraldehyde 3-phosphate + pyruvate + H(+) = 1-deoxy-D-xylulose 5-phosphate + CO2. The protein operates within metabolic intermediate biosynthesis; 1-deoxy-D-xylulose 5-phosphate biosynthesis; 1-deoxy-D-xylulose 5-phosphate from D-glyceraldehyde 3-phosphate and pyruvate: step 1/1. Functionally, catalyzes the acyloin condensation reaction between C atoms 2 and 3 of pyruvate and glyceraldehyde 3-phosphate to yield 1-deoxy-D-xylulose-5-phosphate (DXP). This is 1-deoxy-D-xylulose-5-phosphate synthase from Francisella tularensis subsp. holarctica (strain FTNF002-00 / FTA).